Consider the following 295-residue polypeptide: Small ribosomal subunit protein uS2 (295 aa).

The segment at 261–295 (QAKKFSKTKNIDEETNTEFEQVLNDADENKNSDNA) is disordered.

The protein belongs to the universal ribosomal protein uS2 family.

The polypeptide is Small ribosomal subunit protein uS2 (Rickettsia rickettsii (strain Sheila Smith)).